A 157-amino-acid polypeptide reads, in one-letter code: Protein-export protein SecB (157 aa).

The protein belongs to the SecB family. In terms of assembly, homotetramer, a dimer of dimers. One homotetramer interacts with 1 SecA dimer.

The protein resides in the cytoplasm. In terms of biological role, one of the proteins required for the normal export of preproteins out of the cell cytoplasm. It is a molecular chaperone that binds to a subset of precursor proteins, maintaining them in a translocation-competent state. It also specifically binds to its receptor SecA. This chain is Protein-export protein SecB, found in Rhodopseudomonas palustris (strain TIE-1).